Reading from the N-terminus, the 91-residue chain is DNA-directed RNA polymerase subunit Rpo5 (91 aa).

The protein belongs to the archaeal Rpo5/eukaryotic RPB5 RNA polymerase subunit family. As to quaternary structure, part of the RNA polymerase complex.

Its subcellular location is the cytoplasm. The catalysed reaction is RNA(n) + a ribonucleoside 5'-triphosphate = RNA(n+1) + diphosphate. DNA-dependent RNA polymerase (RNAP) catalyzes the transcription of DNA into RNA using the four ribonucleoside triphosphates as substrates. The sequence is that of DNA-directed RNA polymerase subunit Rpo5 from Staphylothermus marinus (strain ATCC 43588 / DSM 3639 / JCM 9404 / F1).